The following is a 339-amino-acid chain: UDP-N-acetylglucosamine--N-acetylmuramyl-(pentapeptide) pyrophosphoryl-undecaprenol N-acetylglucosamine transferase (339 aa).

UDP-N-acetyl-alpha-D-glucosamine contacts are provided by residues 11–13, asparagine 127, arginine 170, serine 188, isoleucine 235, and glutamine 280; that span reads TGG.

This sequence belongs to the glycosyltransferase 28 family. MurG subfamily.

It is found in the cell inner membrane. It catalyses the reaction di-trans,octa-cis-undecaprenyl diphospho-N-acetyl-alpha-D-muramoyl-L-alanyl-D-glutamyl-meso-2,6-diaminopimeloyl-D-alanyl-D-alanine + UDP-N-acetyl-alpha-D-glucosamine = di-trans,octa-cis-undecaprenyl diphospho-[N-acetyl-alpha-D-glucosaminyl-(1-&gt;4)]-N-acetyl-alpha-D-muramoyl-L-alanyl-D-glutamyl-meso-2,6-diaminopimeloyl-D-alanyl-D-alanine + UDP + H(+). It functions in the pathway cell wall biogenesis; peptidoglycan biosynthesis. Its function is as follows. Cell wall formation. Catalyzes the transfer of a GlcNAc subunit on undecaprenyl-pyrophosphoryl-MurNAc-pentapeptide (lipid intermediate I) to form undecaprenyl-pyrophosphoryl-MurNAc-(pentapeptide)GlcNAc (lipid intermediate II). This Thermotoga neapolitana (strain ATCC 49049 / DSM 4359 / NBRC 107923 / NS-E) protein is UDP-N-acetylglucosamine--N-acetylmuramyl-(pentapeptide) pyrophosphoryl-undecaprenol N-acetylglucosamine transferase.